The primary structure comprises 215 residues: Cytochrome b6 (215 aa).

Residues 32 to 52 (IFYCLGGITFTCFLVQVATGF) form a helical membrane-spanning segment. Heme c is bound at residue Cys35. Heme b-binding residues include His86 and His100. Transmembrane regions (helical) follow at residues 90–110 (ASMMVLMMILHVFRVWLTGGF), 116–136 (LTWTTGVIMAVCTVSFGVTGY), and 186–206 (LHTFVLPLLTAVFMLMHFLMI). The heme b site is built by His187 and His202.

It belongs to the cytochrome b family. PetB subfamily. As to quaternary structure, the 4 large subunits of the cytochrome b6-f complex are cytochrome b6, subunit IV (17 kDa polypeptide, PetD), cytochrome f and the Rieske protein, while the 4 small subunits are PetG, PetL, PetM and PetN. The complex functions as a dimer. It depends on heme b as a cofactor. Heme c serves as cofactor.

The protein localises to the plastid. Its subcellular location is the chloroplast thylakoid membrane. Functionally, component of the cytochrome b6-f complex, which mediates electron transfer between photosystem II (PSII) and photosystem I (PSI), cyclic electron flow around PSI, and state transitions. The sequence is that of Cytochrome b6 from Stigeoclonium helveticum (Green alga).